The sequence spans 1248 residues: von Willebrand factor A domain-containing protein 5B2 (1248 aa).

Positions 1–138 (MPGLYCPTSW…TMTVTLCSSR (138 aa)) constitute a VIT domain. A disordered region spans residues 184-204 (VGSPEEERPTWEQPTATPDVF). One can recognise a VWFA domain in the interval 354-527 (ELLFLLDGSG…KALEPALSDI (174 aa)). Disordered stretches follow at residues 590–650 (PEEV…SSDT), 672–710 (SASP…QQGC), 751–789 (ALAG…EPGQ), 1008–1037 (SKSA…RLSL), and 1126–1168 (DSAT…SSDL). The span at 595–619 (SATSPGTEPTHTTEPLGTGTVSAEL) shows a compositional bias: polar residues. 3 stretches are compositionally biased toward low complexity: residues 684–701 (SSES…GSRP), 751–764 (ALAG…SGRA), and 780–789 (PDGLGPEPGQ). A compositionally biased stretch (low complexity) spans 1127-1145 (SATASCSQSPSSGSEGPGQ). The segment covering 1159 to 1168 (GMERQDSSDL) has biased composition (basic and acidic residues).

The sequence is that of von Willebrand factor A domain-containing protein 5B2 (Vwa5b2) from Mus musculus (Mouse).